The primary structure comprises 557 residues: Probable protein kinase UbiB (557 aa).

The Protein kinase domain maps to 121–509 (AFDTTPLASA…RKLQTRVVTA (389 aa)). ATP is bound by residues 127–135 (LASASIAQV) and Lys154. The Proton acceptor role is filled by Asp289. The next 2 helical transmembrane spans lie at 506–526 (VVTA…YGLH) and 535–555 (VPVW…IAWL).

Belongs to the ABC1 family. UbiB subfamily.

Its subcellular location is the cell inner membrane. Its pathway is cofactor biosynthesis; ubiquinone biosynthesis [regulation]. In terms of biological role, is probably a protein kinase regulator of UbiI activity which is involved in aerobic coenzyme Q (ubiquinone) biosynthesis. The polypeptide is Probable protein kinase UbiB (Xanthomonas campestris pv. campestris (strain B100)).